Here is a 642-residue protein sequence, read N- to C-terminus: Threonine--tRNA ligase (642 aa).

The 61-residue stretch at 1-61 folds into the TGS domain; sequence MPVITLPDGS…ETDSDLSIIT (61 aa). Positions 243-534 are catalytic; the sequence is DHRKIGKQLD…LIEEYAGKFP (292 aa). Residues C334, H385, and H511 each contribute to the Zn(2+) site.

Belongs to the class-II aminoacyl-tRNA synthetase family. As to quaternary structure, homodimer. It depends on Zn(2+) as a cofactor.

It localises to the cytoplasm. The enzyme catalyses tRNA(Thr) + L-threonine + ATP = L-threonyl-tRNA(Thr) + AMP + diphosphate + H(+). Functionally, catalyzes the attachment of threonine to tRNA(Thr) in a two-step reaction: L-threonine is first activated by ATP to form Thr-AMP and then transferred to the acceptor end of tRNA(Thr). Also edits incorrectly charged L-seryl-tRNA(Thr). The chain is Threonine--tRNA ligase from Shewanella pealeana (strain ATCC 700345 / ANG-SQ1).